The sequence spans 1758 residues: Condensin-2 complex subunit hcp-6 (1758 aa).

Disordered regions lie at residues 428 to 501 (DPGA…KAKE), 969 to 1008 (ENGS…KGGM), 1379 to 1460 (QKRL…ARLL), and 1500 to 1656 (SKQA…LSRG). Over residues 438-462 (EQNEEEDEEEEGEDEEEEEENEQDD) the composition is skewed to acidic residues. Basic and acidic residues predominate over residues 463 to 473 (VAVKEEEQSDK). The span at 474 to 484 (SDEENDGDNEE) shows a compositional bias: acidic residues. Over residues 485 to 501 (NVSKKKEEKKKEKKAKE) the composition is skewed to basic and acidic residues. The span at 969–979 (ENGSSDASTVN) shows a compositional bias: polar residues. Residues 999 to 1008 (SSQKSSKGGM) are compositionally biased toward low complexity. A coiled-coil region spans residues 1326–1385 (CIEHKNDIDEILQDNRQLKDEMMFELQRVKQRTEEANRILDEYLKRVAEFKKQQKRLSKS). The span at 1414–1423 (EDQENVEEEV) shows a compositional bias: acidic residues. Composition is skewed to basic and acidic residues over residues 1424–1437 (EMRT…DADV) and 1500–1512 (SKQA…KTIV). Composition is skewed to polar residues over residues 1602 to 1618 (ISAN…QSTE) and 1640 to 1651 (VPTSSSGNTEND).

In terms of assembly, component of the condensin-2 complex.

The protein resides in the nucleus. It localises to the chromosome. The protein localises to the centromere. Chromosomal protein which is recruited to mitotic chromosomes by hcp-3 (CENP-A) and hcp-4 (CENP-C). Involved in chromosome segregation during mitosis, playing a role in chromosome condensation and in maintaining chromosome morphology, rigidity and orientation during mitosis. In Caenorhabditis elegans, this protein is Condensin-2 complex subunit hcp-6.